The chain runs to 204 residues: MSRGALIVFEGLDKSGKTTQCMNIMESIPANTIKYLNFPQRSTVTGKMIDDYLTRKKTYNDHIVNLLFCANRWEFASFIQEQLEQGITLIVDRYAFSGVAYAAAKGASMTLSKSYESGLPKPDLVIFLESGSKEINRNVGEEIYEDVTFQQKVLQEYKKMIEEGDIHWQIISSEFEEDVKKELIKNIVIEAIHTVTGPVGQLWM.

11 to 18 (GLDKSGKT) serves as a coordination point for ATP.

Belongs to the thymidylate kinase family.

It carries out the reaction dTMP + ATP = dTDP + ADP. Its pathway is pyrimidine metabolism; dTTP biosynthesis. The polypeptide is Thymidylate kinase (TMK) (Vaccinia virus (strain Ankara) (VACV)).